The sequence spans 57 residues: Small ribosomal subunit protein bS21 (57 aa).

The tract at residues 35-57 (REHYEKPSVKRKKKAEAARKKKF) is disordered. A compositionally biased stretch (basic residues) spans 43 to 57 (VKRKKKAEAARKKKF).

The protein belongs to the bacterial ribosomal protein bS21 family.

The sequence is that of Small ribosomal subunit protein bS21 from Alkaliphilus metalliredigens (strain QYMF).